A 297-amino-acid chain; its full sequence is Coiled-coil domain-containing protein 159 (297 aa).

Residues 147-297 adopt a coiled-coil conformation; it reads EELELVREEV…SKSGRSFPPA (151 aa). Positions 256 to 297 are disordered; sequence LRGHKGHQCLSPPLPSWDSDSDCDQDLSQPPFSKSGRSFPPA.

As to quaternary structure, interacts with DYNLT2. Interacts with GGNBP1. Interacts with OSBP2.

Its function is as follows. Functions during spermatid development; may participate in the centrosome reduction procedure of spermatids and is required for the formation of the connecting piece/sperm head-tail coupling apparatus (HTCA) and the correct and tight attachment of the flagellum to the nuclear envelope. This chain is Coiled-coil domain-containing protein 159 (CCDC159), found in Homo sapiens (Human).